A 429-amino-acid chain; its full sequence is uncharacterized protein (429 aa).

Active-site charge relay system residues include Ser-116, Asp-179, and His-206.

Belongs to the AB hydrolase 3 family.

The protein resides in the cytoplasm. The protein localises to the nucleus. This is an uncharacterized protein from Schizosaccharomyces pombe (strain 972 / ATCC 24843) (Fission yeast).